The chain runs to 451 residues: Prenyltransferase anuH (451 aa).

Dimethylallyl diphosphate-binding residues include R105, K189, Y191, K257, Y259, and Y422.

The protein belongs to the tryptophan dimethylallyltransferase family.

The enzyme catalyses (8S)-annullatin E + dimethylallyl diphosphate = (8S)-annullatin J + diphosphate. The protein operates within secondary metabolite biosynthesis. In terms of biological role, cytochrome P450 monooxygenase; part of the gene cluster that mediates the biosynthesis of annullatin D, an alkylated aromatic polyketide with a fused dihydrobenzofuran lactone ring system that exhibits potent agonistic activities toward the cannabinoid receptors. Within the pathway, anuH uses dimethylallyl diphosphate (DMAPP) to prenylate (8S)-annullatin E to produce (8S)-annullatin J. Geranyl and farnesyl diphosphate are not consumed by anuH for prenylation. 2-hydroxymethyl-3-pentylphenol, without the hydroxyl group at the side chain, is also accepted by anuH, but only with low conversion yield. The annullatin backbone 2-hydroxymethyl-3-pentylphenol is assembled from one acetyl-CoA starter unit and 5 malonyl-CoA elongation units by cooperation of the highly reducing polyketide synthase anuA, the short-chain dehydrogenase anuB and the oxidoreductase anuC, before being hydroxylated at the C-5 alkyl chain by the cytochrome P450 monooxygenase anuE to form (8S)-annullatin E. The prenyltransferase anuH subsequently installs one isoprenyl group at the benzene ring to form (8S)-annullatin J. Enzymatic or nonenzymatic dihydro-benzofuran ring formation between the prenyl and the phenolic hydroxyl groups in (8S)-annullatin J results in two diastereomers (2S,9S)-annullatin H and compound 12. The intermediate (2S,9S)-annullatin H is then converted to (2S,9S)-annullatin D by the FAD-linked oxidoreductase anuG-catalyzed five-member lactone ring formation. The isomer 12 acts as a substrate for the short-chain dehydrogenase anuF and is oxidized to (2R)-annullatin F, which is subsequently acetylated by an acetyltransferase leading to (2R)-annullatin G formation. The remaining enzymes identified within the cluster, anuD, anuI and anuJ, seem not to be involved in annullatin biosynthesis. The chain is Prenyltransferase anuH from Penicillium roqueforti (strain FM164).